The sequence spans 409 residues: Protein ROOT PRIMORDIUM DEFECTIVE 1 (409 aa).

Residues 47 to 386 (VRDHGYDNYM…RLAELVLMSP (340 aa)) enclose the PORR domain.

As to expression, expressed in roots, hypocotyls, cotyledons and shoot apex.

Involved in pre-arranging the maintenance of the active cell proliferation during root primordium development. Does not seem to be involved in cell cycle progression. This chain is Protein ROOT PRIMORDIUM DEFECTIVE 1 (RPD1), found in Arabidopsis thaliana (Mouse-ear cress).